Reading from the N-terminus, the 143-residue chain is Large ribosomal subunit protein uL15 (143 aa).

The disordered stretch occupies residues 1 to 59 (MELNGIKPSLGAKHAKRRVGRGIGSGLGKTAGRGHKGQKSRAGGYHKVGFEGGQMPMQR). The segment covering 21–31 (RGIGSGLGKTA) has biased composition (gly residues).

The protein belongs to the universal ribosomal protein uL15 family. Part of the 50S ribosomal subunit.

Functionally, binds to the 23S rRNA. The chain is Large ribosomal subunit protein uL15 from Polaromonas sp. (strain JS666 / ATCC BAA-500).